A 119-amino-acid polypeptide reads, in one-letter code: Chorion class CA protein ERA.2 (119 aa).

The first 21 residues, 1–21 (MSKLVVFLFCIQVCFIQNVYS), serve as a signal peptide directing secretion. The left arm stretch occupies residues 22–55 (QCLGRVGPGGPPLGPYGGPLGGPGYGPVGYGGCG). The tract at residues 56–103 (GYGGSGIGNVAVAGELPVAGSTGVTGQVPVIGAVEFAGPACAVGSVSI) is central domain. Residues 104-119 (SGACGPTCGCGGSPFY) form a right arm region.

This sequence belongs to the chorion protein family.

This protein is one of many from the eggshell of the silk moth. The chain is Chorion class CA protein ERA.2 (ERA.2) from Bombyx mori (Silk moth).